A 366-amino-acid polypeptide reads, in one-letter code: Septin-1 (366 aa).

Positions 22–295 constitute a Septin-type G domain; the sequence is KGFDFTLMVA…EGYRARCLQS (274 aa). A G1 motif region spans residues 32 to 39; sequence GESGLGKS. Residues 32–39, T66, G92, and 171–179 contribute to the GTP site; these read GESGLGKS and KADALMPRE. The G3 motif stretch occupies residues 89–92; the sequence is DTPG. Positions 170-173 are G4 motif; the sequence is GKAD. S206 carries the post-translational modification Phosphoserine. GTP contacts are provided by G229 and R244. Residue S247 is modified to Phosphoserine. Position 250 is a phosphothreonine (T250). A phosphoserine; by AURKB mark is found at S306 and S314. The segment at 347–366 is disordered; it reads EKMQAQMQQSQAQGEQSDVL. Positions 349-366 are enriched in low complexity; that stretch reads MQAQMQQSQAQGEQSDVL.

Belongs to the TRAFAC class TrmE-Era-EngA-EngB-Septin-like GTPase superfamily. Septin GTPase family. As to quaternary structure, septins polymerize into heterooligomeric protein complexes that form filaments, and can associate with cellular membranes, actin filaments and microtubules. GTPase activity is required for filament formation. Interacts with AURKB.

Its subcellular location is the cytoplasm. The protein resides in the cytoskeleton. It is found in the microtubule organizing center. It localises to the centrosome. The protein localises to the midbody. Functionally, filament-forming cytoskeletal GTPase. May play a role in cytokinesis (Potential). The sequence is that of Septin-1 from Mus musculus (Mouse).